A 66-amino-acid chain; its full sequence is Large ribosomal subunit protein bL35 (66 aa).

The span at 1–16 (MPKQKTHRASAKRFKR) shows a compositional bias: basic residues. The segment at 1 to 21 (MPKQKTHRASAKRFKRTGNGG) is disordered.

Belongs to the bacterial ribosomal protein bL35 family.

The chain is Large ribosomal subunit protein bL35 from Lactococcus lactis subsp. cremoris (strain MG1363).